Here is a 467-residue protein sequence, read N- to C-terminus: Cysteine--tRNA ligase (467 aa).

Cys-30 lines the Zn(2+) pocket. Residues 32 to 42 carry the 'HIGH' region motif; that stretch reads PTVYDDSHLGH. Zn(2+) is bound by residues Cys-209, His-239, and Glu-243. A 'KMSKS' region motif is present at residues 271 to 275; that stretch reads KMSKS. Lys-274 is an ATP binding site.

The protein belongs to the class-I aminoacyl-tRNA synthetase family. Monomer. Zn(2+) serves as cofactor.

The protein resides in the cytoplasm. The catalysed reaction is tRNA(Cys) + L-cysteine + ATP = L-cysteinyl-tRNA(Cys) + AMP + diphosphate. The polypeptide is Cysteine--tRNA ligase (Aliarcobacter butzleri (strain RM4018) (Arcobacter butzleri)).